A 162-amino-acid polypeptide reads, in one-letter code: MELDLISYELDEKTKEGIEKVVEKFFTKAEPDLVLIFDKAGRILACKGMDISDTYSEFISSILSALFFASEELTSMLDKNDEMKDVFYETKNRVFLMARLEKDFLIGVISRKNLSLGSIRLFFNHLVSDLNAVLKNLKEVEKKSLKISKEELKKKLDQILGS.

Residues 129 to 161 (DLNAVLKNLKEVEKKSLKISKEELKKKLDQILG) adopt a coiled-coil conformation.

This is an uncharacterized protein from Aquifex aeolicus (strain VF5).